A 170-amino-acid polypeptide reads, in one-letter code: Lipoprotein signal peptidase (170 aa).

4 consecutive transmembrane segments (helical) span residues 11-31 (LGWL…KLHF), 41-61 (IVVI…AAFS), 69-89 (WQRW…VVWL), and 95-115 (NETW…GNLY). Catalysis depends on residues Asp-125 and Asp-144. The chain crosses the membrane as a helical span at residues 136 to 156 (YFPAFNFADSAITVGAVMLAL).

This sequence belongs to the peptidase A8 family.

It is found in the cell inner membrane. It carries out the reaction Release of signal peptides from bacterial membrane prolipoproteins. Hydrolyzes -Xaa-Yaa-Zaa-|-(S,diacylglyceryl)Cys-, in which Xaa is hydrophobic (preferably Leu), and Yaa (Ala or Ser) and Zaa (Gly or Ala) have small, neutral side chains.. The protein operates within protein modification; lipoprotein biosynthesis (signal peptide cleavage). Functionally, this protein specifically catalyzes the removal of signal peptides from prolipoproteins. The chain is Lipoprotein signal peptidase from Pseudomonas fluorescens (strain ATCC BAA-477 / NRRL B-23932 / Pf-5).